Reading from the N-terminus, the 453-residue chain is Ribulose bisphosphate carboxylase large chain (453 aa).

A propeptide spanning residues 1 to 2 (MS) is cleaved from the precursor. At P3 the chain carries N-acetylproline. Residue K14 is modified to N6,N6,N6-trimethyllysine. Positions 123 and 173 each coordinate substrate. The active-site Proton acceptor is K175. K177 contributes to the substrate binding site. Mg(2+) is bound by residues K201, D203, and E204. K201 is modified (N6-carboxylysine). Residue H294 is the Proton acceptor of the active site. The substrate site is built by R295, H327, and S379.

Belongs to the RuBisCO large chain family. Type I subfamily. As to quaternary structure, heterohexadecamer of 8 large chains and 8 small chains; disulfide-linked. The disulfide link is formed within the large subunit homodimers. The cofactor is Mg(2+). In terms of processing, the disulfide bond which can form in the large chain dimeric partners within the hexadecamer appears to be associated with oxidative stress and protein turnover.

Its subcellular location is the plastid. The protein resides in the chloroplast. It catalyses the reaction 2 (2R)-3-phosphoglycerate + 2 H(+) = D-ribulose 1,5-bisphosphate + CO2 + H2O. The catalysed reaction is D-ribulose 1,5-bisphosphate + O2 = 2-phosphoglycolate + (2R)-3-phosphoglycerate + 2 H(+). Its function is as follows. RuBisCO catalyzes two reactions: the carboxylation of D-ribulose 1,5-bisphosphate, the primary event in carbon dioxide fixation, as well as the oxidative fragmentation of the pentose substrate in the photorespiration process. Both reactions occur simultaneously and in competition at the same active site. This Galium aparine (Catchweed bedstraw) protein is Ribulose bisphosphate carboxylase large chain.